The following is a 251-amino-acid chain: Methionine aminopeptidase (251 aa).

His77 contributes to the substrate binding site. A divalent metal cation contacts are provided by Asp94, Asp105, and His169. His176 provides a ligand contact to substrate. The a divalent metal cation site is built by Glu202 and Glu233.

It belongs to the peptidase M24A family. Methionine aminopeptidase type 1 subfamily. As to quaternary structure, monomer. The cofactor is Co(2+). It depends on Zn(2+) as a cofactor. Mn(2+) is required as a cofactor. Requires Fe(2+) as cofactor.

The catalysed reaction is Release of N-terminal amino acids, preferentially methionine, from peptides and arylamides.. Its function is as follows. Removes the N-terminal methionine from nascent proteins. The N-terminal methionine is often cleaved when the second residue in the primary sequence is small and uncharged (Met-Ala-, Cys, Gly, Pro, Ser, Thr, or Val). Requires deformylation of the N(alpha)-formylated initiator methionine before it can be hydrolyzed. This is Methionine aminopeptidase from Mycoplasma capricolum subsp. capricolum (strain California kid / ATCC 27343 / NCTC 10154).